A 2123-amino-acid chain; its full sequence is Toxin Afp18 (2123 aa).

The interval 864–919 (FFDNSDQDADQPRVRRKREMTDEIMLSDGSSRSEAKALPDENELDTDQSKSRPESA) is disordered. A tyrosine glycosyltransferase region spans residues 1771 to 2123 (VFDSANTNRS…GNSTQSSGLS (353 aa)). Residues 1850–1852 (IWV) and 1940–1941 (SD) contribute to the UDP-N-acetyl-alpha-D-glucosamine site. A divalent metal cation is bound by residues D1957 and D1959. Positions 1957–1960 (DIDD) match the DxDD motif motif. N1993 contacts UDP-N-acetyl-alpha-D-glucosamine.

It depends on a divalent metal cation as a cofactor.

The protein resides in the secreted. Its subcellular location is the host cell membrane. The catalysed reaction is L-tyrosyl-[protein] + UDP-N-acetyl-alpha-D-glucosamine = O-(N-acetyl-alpha-D-glucosaminyl)-L-tyrosyl-[protein] + UDP + H(+). Its function is as follows. Toxin component of the prophage tail-derived protein translocation system Afp, which is the causative agent of enteric redmouth disease in salmonid fish species. Mono-O-GlcNAcylates the small GTPase RhoA in eukaryotic host cells at Tyr-34, using UDP-N-acetylglucosamine (UDP-GlcNAc) as the sugar donor. Glycosylation of RhoA results in impaired effector and regulator interaction and inactivation of downstream RhoA signaling which leads to actin filament depolymerization and blocks cytokinesis and gastrulation during zebrafish embryo development. To a lesser extent, is also able to glycosylate other Rho family GTPases (RhoB, RhoC, Rac1, Rac2, Rac3, and Cdc42) in vitro at a switch I tyrosine residue, but not Ras proteins. This Yersinia ruckeri serotype O1 (strain ATCC 29473 / DSM 18506 / JCM 15110 / CCUG 14190 / NCIMB 2194 / NCTC 12986 / 2396-61) protein is Toxin Afp18.